We begin with the raw amino-acid sequence, 308 residues long: Acetyl-coenzyme A carboxylase carboxyl transferase subunit beta (308 aa).

Residues 26–295 (LWIKDPETGE…EQKPLEPEIL (270 aa)) form the CoA carboxyltransferase N-terminal domain.

The protein belongs to the AccD/PCCB family. Acetyl-CoA carboxylase is a heterohexamer composed of biotin carboxyl carrier protein (AccB), biotin carboxylase (AccC) and two subunits each of ACCase subunit alpha (AccA) and ACCase subunit beta (AccD).

The protein resides in the cytoplasm. The enzyme catalyses N(6)-carboxybiotinyl-L-lysyl-[protein] + acetyl-CoA = N(6)-biotinyl-L-lysyl-[protein] + malonyl-CoA. It functions in the pathway lipid metabolism; malonyl-CoA biosynthesis; malonyl-CoA from acetyl-CoA: step 1/1. Component of the acetyl coenzyme A carboxylase (ACC) complex. Biotin carboxylase (BC) catalyzes the carboxylation of biotin on its carrier protein (BCCP) and then the CO(2) group is transferred by the transcarboxylase to acetyl-CoA to form malonyl-CoA. The polypeptide is Acetyl-coenzyme A carboxylase carboxyl transferase subunit beta (Mesorhizobium japonicum (strain LMG 29417 / CECT 9101 / MAFF 303099) (Mesorhizobium loti (strain MAFF 303099))).